Reading from the N-terminus, the 430-residue chain is uncharacterized protein (430 aa).

The next 2 helical transmembrane spans lie at 20-40 and 405-425; these read YLCL…GIMP and YIWW…LLVI.

The protein resides in the membrane. This is an uncharacterized protein from Schizosaccharomyces pombe (strain 972 / ATCC 24843) (Fission yeast).